Consider the following 436-residue polypeptide: Septin-7 (436 aa).

An N-acetylserine modification is found at Ser2. Tyr29 is subject to Phosphotyrosine. A Septin-type G domain is found at 46–315 (RGFEFTLMVV…ENYRSRKLAA (270 aa)). Residues 46 to 316 (RGFEFTLMVV…NYRSRKLAAV (271 aa)) form an interaction with SEPTIN12 region. Positions 56–63 (GESGLGKS) are G1 motif. GTP is bound at residue 56–63 (GESGLGKS). The residue at position 76 (Ser76) is a Phosphoserine. GTP-binding positions include Thr89, Gly115, and 194-202 (KADTLTPEE). The interval 112-115 (DTPG) is G3 motif. The tract at residues 193 to 196 (AKAD) is G4 motif. Thr227 is modified (phosphothreonine). The GTP site is built by Gly249 and Arg264. Residues 331–436 (TKSPLAQMEE…EKNKKKGKIF (106 aa)) adopt a coiled-coil conformation. Ser333 carries the phosphoserine modification. At Lys372 the chain carries N6-acetyllysine. The span at 377-409 (ELQRRHEQMKKNLEAQHKELEEKRRQFEEEKAN) shows a compositional bias: basic and acidic residues. A disordered region spans residues 377 to 436 (ELQRRHEQMKKNLEAQHKELEEKRRQFEEEKANWEAQQRILEQQNSSRTLEKNKKKGKIF). Ser423 is subject to Phosphoserine. Thr425 carries the phosphothreonine modification.

The protein belongs to the TRAFAC class TrmE-Era-EngA-EngB-Septin-like GTPase superfamily. Septin GTPase family. Septins polymerize into heterooligomeric protein complexes that form filaments, and associate with cellular membranes, actin filaments and microtubules. GTPase activity is required for filament formation. Filaments are assembled from asymmetrical heterotrimers, composed of SEPTIN2, SEPTIN6 and SEPTIN7 that associate head-to-head to form a hexameric unit. Within the trimer, directly interacts with SEPTIN6, while interaction with SEPTIN2 seems indirect. In the absence of SEPTIN6, forms homodimers. Interacts directly with CENPE and links CENPE to septin filaments composed of SEPTIN2, SEPTIN6 and SEPTIN7. Interacts with SEPTIN8, SEPTIN9 and SEPTIN11. Component of a septin core octameric complex consisting of SEPTIN12, SEPTIN7, SEPTIN6 and SEPTIN2 or SEPTIN4 in the order 12-7-6-2-2-6-7-12 or 12-7-6-4-4-6-7-12 and located in the sperm annulus; the SEPTIN12:SEPTIN7 association is mediated by the respective GTP-binding domains. Interacts with SEPTIN2 and SEPTIN5. Expressed in the cerebral cortex (at protein level).

Its subcellular location is the cytoplasm. It localises to the chromosome. It is found in the centromere. The protein localises to the kinetochore. The protein resides in the cytoskeleton. Its subcellular location is the spindle. It localises to the cleavage furrow. It is found in the midbody. The protein localises to the cilium axoneme. The protein resides in the cell projection. Its subcellular location is the cilium. It localises to the flagellum. Filament-forming cytoskeletal GTPase. Required for normal organization of the actin cytoskeleton. Required for normal progress through mitosis. Involved in cytokinesis. Required for normal association of CENPE with the kinetochore. Plays a role in ciliogenesis and collective cell movements. Forms a filamentous structure with SEPTIN12, SEPTIN6, SEPTIN2 and probably SEPTIN4 at the sperm annulus which is required for the structural integrity and motility of the sperm tail during postmeiotic differentiation. The protein is Septin-7 of Mus musculus (Mouse).